The sequence spans 513 residues: Interferon alpha/beta receptor 2 (513 aa).

Residues 1 to 21 form the signal peptide; sequence MRSRCTVSAVGLLSLCLVVSA. The Extracellular segment spans residues 22–242; that stretch reads SLETITPSAF…GQESGLSESA (221 aa). 2 cysteine pairs are disulfide-bonded: C39–C123 and C85–C93. N42, N58, N65, N78, and N84 each carry an N-linked (GlcNAc...) asparagine glycan. Residues N149, N191, and N195 are each glycosylated (N-linked (GlcNAc...) asparagine). Cysteines 210 and 227 form a disulfide. Residues 243 to 263 traverse the membrane as a helical segment; it reads IVGITTSCLVVMVFVSTIVML. The Cytoplasmic segment spans residues 264–513; sequence KRIGYICLKD…ADVGDGYIMR (250 aa). The tract at residues 334-402 is disordered; the sequence is GYTMHGLTGK…DPTGPYERRK (69 aa). The residue at position 335 (Y335) is a Phosphotyrosine. Positions 344–354 are enriched in polar residues; the sequence is PLQQTSDTSAS. Residues 377 to 389 are compositionally biased toward low complexity; it reads GAEPELPTEAGAG. S403 bears the Phosphoserine mark. Residues 421–444 are mediates interaction with STAT2 (and required for the recruitment of USP18); it reads GDNIIFNVNLNSVFLRVLHDEDAS. S448 and S465 each carry phosphoserine. The interval 458–513 is disordered; sequence EGPQRTESDLRIAGGDRTQPPLPSLPSQDLWTEDGSSEKSDTSDSDADVGDGYIMR. Y510 carries the phosphotyrosine modification.

This sequence belongs to the type II cytokine receptor family. In terms of assembly, heterodimer with IFNAR1; forming the receptor for type I interferon. Interacts with the transcriptional factors STAT1 and STAT2. Interacts with JAK1. Interacts with USP18; indirectly via STAT2, it negatively regulates the assembly of the ternary interferon-IFNAR1-IFNAR2 complex and therefore type I interferon signaling. Post-translationally, phosphorylated on tyrosine residues upon interferon binding. Phosphorylation at Tyr-335 or Tyr-510 are sufficient to mediate interferon dependent activation of STAT1, STAT2 and STAT3 leading to antiproliferative effects on many different cell types. Widely expressed. Detected in liver, testis, kidney, salivary gland, thymus, brain, lung and placenta. Isoform 1, isoform 2 and isoform 3 are expressed in brain.

It localises to the cell membrane. The protein resides in the secreted. Functionally, together with IFNAR1, forms the heterodimeric receptor for type I interferons (including interferons alpha, beta, epsilon, omega and kappa). Type I interferon binding activates the JAK-STAT signaling cascade, resulting in transcriptional activation or repression of interferon-regulated genes that encode the effectors of the interferon response. Mechanistically, type I interferon-binding brings the IFNAR1 and IFNAR2 subunits into close proximity with one another, driving their associated Janus kinases (JAKs) (TYK2 bound to IFNAR1 and JAK1 bound to IFNAR2) to cross-phosphorylate one another. The activated kinases phosphorylate specific tyrosine residues on the intracellular domains of IFNAR1 and IFNAR2, forming docking sites for the STAT transcription factors (STAT1, STAT2 and STAT). STAT proteins are then phosphorylated by the JAKs, promoting their translocation into the nucleus to regulate expression of interferon-regulated genes. Its function is as follows. May be potent inhibitors of type I IFN receptor activity. This chain is Interferon alpha/beta receptor 2 (Ifnar2), found in Mus musculus (Mouse).